Here is a 293-residue protein sequence, read N- to C-terminus: Non-homologous end joining protein Ku (293 aa).

The region spanning 10–195 (ISFGLVHIPV…KLDKRELEMA (186 aa)) is the Ku domain. The required for dimerization stretch occupies residues 216–229 (SDKIMKLVEEKAAK). A disordered region spans residues 260 to 293 (RSRAGGGKDKGSEKAGADAKGRAKSGASRSRRKA). Residues 265 to 280 (GGKDKGSEKAGADAKG) show a composition bias toward basic and acidic residues.

Belongs to the prokaryotic Ku family. As to quaternary structure, homodimer, may form higher-order multimers on DNA. Non-dimerized protein does not stimulate LigD ligase activity. Probably interacts with LigD.

Its function is as follows. With LigD forms a non-homologous end joining (NHEJ) DNA repair enzyme, which repairs dsDNA breaks with reduced fidelity. Stimulates rNTP addition to DSB and end joining (ligation) of linear DNA by LigD, on 3'-overhangs and probably also 5'-overhangs and blunt dsDNA breaks. Binds both ends of linear dsDNA protecting it from exonuclease activity. This chain is Non-homologous end joining protein Ku, found in Pseudomonas aeruginosa (strain ATCC 15692 / DSM 22644 / CIP 104116 / JCM 14847 / LMG 12228 / 1C / PRS 101 / PAO1).